Reading from the N-terminus, the 397-residue chain is Phosphoglycerate kinase (397 aa).

Substrate is bound by residues 21–23, Arg37, 60–63, Arg119, and Arg152; these read DFN and HLGR. Residues Lys203, Gly294, Glu325, and 354–357 each bind ATP; that span reads GGDS.

This sequence belongs to the phosphoglycerate kinase family. In terms of assembly, monomer.

The protein localises to the cytoplasm. It carries out the reaction (2R)-3-phosphoglycerate + ATP = (2R)-3-phospho-glyceroyl phosphate + ADP. It participates in carbohydrate degradation; glycolysis; pyruvate from D-glyceraldehyde 3-phosphate: step 2/5. This Chlorobium phaeovibrioides (strain DSM 265 / 1930) (Prosthecochloris vibrioformis (strain DSM 265)) protein is Phosphoglycerate kinase.